We begin with the raw amino-acid sequence, 128 residues long: Small ribosomal subunit protein uS11 (128 aa).

The protein belongs to the universal ribosomal protein uS11 family. As to quaternary structure, part of the 30S ribosomal subunit. Interacts with proteins S7 and S18. Binds to IF-3.

Functionally, located on the platform of the 30S subunit, it bridges several disparate RNA helices of the 16S rRNA. Forms part of the Shine-Dalgarno cleft in the 70S ribosome. The chain is Small ribosomal subunit protein uS11 from Desulfatibacillum aliphaticivorans.